The sequence spans 89 residues: Small ribosomal subunit protein uS15 (89 aa).

Belongs to the universal ribosomal protein uS15 family. As to quaternary structure, part of the 30S ribosomal subunit. Forms a bridge to the 50S subunit in the 70S ribosome, contacting the 23S rRNA.

Its function is as follows. One of the primary rRNA binding proteins, it binds directly to 16S rRNA where it helps nucleate assembly of the platform of the 30S subunit by binding and bridging several RNA helices of the 16S rRNA. In terms of biological role, forms an intersubunit bridge (bridge B4) with the 23S rRNA of the 50S subunit in the ribosome. This chain is Small ribosomal subunit protein uS15, found in Pelodictyon phaeoclathratiforme (strain DSM 5477 / BU-1).